We begin with the raw amino-acid sequence, 341 residues long: 4-hydroxy-2-oxovalerate aldolase (341 aa).

The region spanning 9–260 is the Pyruvate carboxyltransferase domain; the sequence is VVITDSTLRD…ATGIDLYRVL (252 aa). Substrate is bound at residue 17-18; it reads RD. Aspartate 18 lines the Mn(2+) pocket. The active-site Proton acceptor is histidine 21. Substrate is bound by residues serine 172 and histidine 199. The Mn(2+) site is built by histidine 199 and histidine 201.

This sequence belongs to the 4-hydroxy-2-oxovalerate aldolase family.

The catalysed reaction is (S)-4-hydroxy-2-oxopentanoate = acetaldehyde + pyruvate. The protein is 4-hydroxy-2-oxovalerate aldolase of Spirochaeta aurantia.